Consider the following 445-residue polypeptide: Argininosuccinate synthase (445 aa).

ATP contacts are provided by residues 17–25 (AFSGGLDTS) and Ala43. Tyr99 lines the L-citrulline pocket. ATP contacts are provided by Gly129 and Thr131. Residues Thr131, Asn135, and Asp136 each coordinate L-aspartate. Asn135 lines the L-citrulline pocket. An ATP-binding site is contributed by Asp136. Positions 139 and 192 each coordinate L-citrulline. Asp194 is an ATP binding site. Thr201, Glu203, and Glu280 together coordinate L-citrulline.

It belongs to the argininosuccinate synthase family. Type 2 subfamily. Homotetramer.

Its subcellular location is the cytoplasm. The enzyme catalyses L-citrulline + L-aspartate + ATP = 2-(N(omega)-L-arginino)succinate + AMP + diphosphate + H(+). It participates in amino-acid biosynthesis; L-arginine biosynthesis; L-arginine from L-ornithine and carbamoyl phosphate: step 2/3. This Afipia carboxidovorans (strain ATCC 49405 / DSM 1227 / KCTC 32145 / OM5) (Oligotropha carboxidovorans) protein is Argininosuccinate synthase.